Consider the following 456-residue polypeptide: tRNA-2-methylthio-N(6)-dimethylallyladenosine synthase (456 aa).

The MTTase N-terminal domain occupies 18 to 134; sequence KKLFIETYGC…LPDLVASVEA (117 aa). Cys-27, Cys-63, Cys-98, Cys-172, Cys-176, and Cys-179 together coordinate [4Fe-4S] cluster. Positions 158 to 390 constitute a Radical SAM core domain; that stretch reads CGNHISGFVS…IELQNRLSAE (233 aa). The 64-residue stretch at 393–456 folds into the TRAM domain; sequence ARDVGKTFEV…SATLKGEEVF (64 aa).

The protein belongs to the methylthiotransferase family. MiaB subfamily. In terms of assembly, monomer. It depends on [4Fe-4S] cluster as a cofactor.

The protein resides in the cytoplasm. It catalyses the reaction N(6)-dimethylallyladenosine(37) in tRNA + (sulfur carrier)-SH + AH2 + 2 S-adenosyl-L-methionine = 2-methylsulfanyl-N(6)-dimethylallyladenosine(37) in tRNA + (sulfur carrier)-H + 5'-deoxyadenosine + L-methionine + A + S-adenosyl-L-homocysteine + 2 H(+). Catalyzes the methylthiolation of N6-(dimethylallyl)adenosine (i(6)A), leading to the formation of 2-methylthio-N6-(dimethylallyl)adenosine (ms(2)i(6)A) at position 37 in tRNAs that read codons beginning with uridine. This chain is tRNA-2-methylthio-N(6)-dimethylallyladenosine synthase, found in Phocaeicola vulgatus (strain ATCC 8482 / DSM 1447 / JCM 5826 / CCUG 4940 / NBRC 14291 / NCTC 11154) (Bacteroides vulgatus).